The following is a 173-amino-acid chain: ATP synthase subunit beta, mitochondrial (173 aa).

The protein belongs to the ATPase alpha/beta chains family. As to quaternary structure, F-type ATPases have 2 components, CF(1) - the catalytic core - and CF(0) - the membrane proton channel. CF(1) has five subunits: alpha(3), beta(3), gamma(1), delta(1), epsilon(1). CF(0) has three main subunits: a, b and c.

Its subcellular location is the mitochondrion. It localises to the mitochondrion inner membrane. It catalyses the reaction ATP + H2O + 4 H(+)(in) = ADP + phosphate + 5 H(+)(out). In terms of biological role, mitochondrial membrane ATP synthase (F(1)F(0) ATP synthase or Complex V) produces ATP from ADP in the presence of a proton gradient across the membrane which is generated by electron transport complexes of the respiratory chain. F-type ATPases consist of two structural domains, F(1) - containing the extramembraneous catalytic core and F(0) - containing the membrane proton channel, linked together by a central stalk and a peripheral stalk. During catalysis, ATP synthesis in the catalytic domain of F(1) is coupled via a rotary mechanism of the central stalk subunits to proton translocation. Subunits alpha and beta form the catalytic core in F(1). Rotation of the central stalk against the surrounding alpha(3)beta(3) subunits leads to hydrolysis of ATP in three separate catalytic sites on the beta subunits. This chain is ATP synthase subunit beta, mitochondrial (ATPB), found in Actinidia deliciosa (Kiwi).